Reading from the N-terminus, the 459-residue chain is Vanillin aminotransferase (459 aa).

Residues 115–116 and Asp-255 contribute to the pyridoxal 5'-phosphate site; that span reads GS. An N6-(pyridoxal phosphate)lysine modification is found at Lys-284. 320-321 provides a ligand contact to pyridoxal 5'-phosphate; that stretch reads FT. A coiled-coil region spans residues 428-459; that stretch reads LSLEELDELIRIYGKALKDTEKRVEELKSQKK.

It belongs to the class-III pyridoxal-phosphate-dependent aminotransferase family. In terms of tissue distribution, expressed in placental tissue of immature fruit.

The enzyme catalyses vanillin + L-alanine = vanillylamine + pyruvate. In terms of biological role, involved in the biosynthesis of capsaicinoids natural products, pungent alkaloids synthesized from phenylpropanoid intermediates in the placental tissue of chili pepper fruit acting as repellant on herbivorous mammals and conferring spiciness to hot peppers. Can transfer an amine from alanine to vanillin, forming vanillylamine and pyruvate. This Capsicum frutescens (Cayenne pepper) protein is Vanillin aminotransferase.